Here is a 400-residue protein sequence, read N- to C-terminus: Inosine-5'-monophosphate dehydrogenase (400 aa).

The segment covering 96-116 (KNESTPDQNLDKESTDGKDTK) has biased composition (basic and acidic residues). The disordered stretch occupies residues 96–125 (KNESTPDQNLDKESTDGKDTKSNNNIDAYS). NAD(+)-binding positions include Asp163 and 212-214 (GIG). Gly214 and Gly216 together coordinate K(+). Ser217 serves as a coordination point for IMP. Cys219 contacts K(+). Residue Cys219 is the Thioimidate intermediate of the active site. IMP is bound by residues 252 to 254 (DGG), 275 to 276 (GS), and 299 to 303 (YRGMG). Residue Arg315 is the Proton acceptor of the active site. Glu329 is an IMP binding site. Residues Glu383, Ser384, and His385 each contribute to the K(+) site.

Belongs to the IMPDH/GMPR family. In terms of assembly, homotetramer. K(+) serves as cofactor.

It is found in the cytoplasm. It carries out the reaction IMP + NAD(+) + H2O = XMP + NADH + H(+). It participates in purine metabolism; XMP biosynthesis via de novo pathway; XMP from IMP: step 1/1. Its activity is regulated as follows. Mycophenolic acid (MPA) is a non-competitive inhibitor that prevents formation of the closed enzyme conformation by binding to the same site as the amobile flap. In contrast, mizoribine monophosphate (MZP) is a competitive inhibitor that induces the closed conformation. MPA is a potent inhibitor of mammalian IMPDHs but a poor inhibitor of the bacterial enzymes. MZP is a more potent inhibitor of bacterial IMPDH. Resistant to mycophenolic acid (MPA) inhibition. Functionally, catalyzes the conversion of inosine 5'-phosphate (IMP) to xanthosine 5'-phosphate (XMP), the first committed and rate-limiting step in the de novo synthesis of guanine nucleotides, and therefore plays an important role in the regulation of cell growth. The chain is Inosine-5'-monophosphate dehydrogenase from Cryptosporidium parvum.